The chain runs to 690 residues: Potassium-transporting ATPase ATP-binding subunit (690 aa).

4 consecutive transmembrane segments (helical) span residues 49-69 (SPVM…CFVP), 72-92 (AVPT…VLFA), 229-249 (VALD…VVTL), and 253-273 (ALFA…VTLI). The 4-aspartylphosphate intermediate role is filled by aspartate 317. ATP contacts are provided by residues aspartate 354, glutamate 358, 385 to 392 (FSAETRLS), and lysine 403. The Mg(2+) site is built by aspartate 526 and aspartate 530. The next 3 helical transmembrane spans lie at 596 to 616 (FAIL…LNVM), 624 to 644 (AILS…PLAL), and 662 to 682 (LLIY…AIDL).

It belongs to the cation transport ATPase (P-type) (TC 3.A.3) family. Type IA subfamily. The system is composed of three essential subunits: KdpA, KdpB and KdpC.

It is found in the cell inner membrane. It catalyses the reaction K(+)(out) + ATP + H2O = K(+)(in) + ADP + phosphate + H(+). Part of the high-affinity ATP-driven potassium transport (or Kdp) system, which catalyzes the hydrolysis of ATP coupled with the electrogenic transport of potassium into the cytoplasm. This subunit is responsible for energy coupling to the transport system and for the release of the potassium ions to the cytoplasm. This Pseudomonas aeruginosa (strain ATCC 15692 / DSM 22644 / CIP 104116 / JCM 14847 / LMG 12228 / 1C / PRS 101 / PAO1) protein is Potassium-transporting ATPase ATP-binding subunit.